We begin with the raw amino-acid sequence, 322 residues long: Epoxide hydrolase A (322 aa).

The AB hydrolase-1 domain maps to 27–131 (PVVILAHGFP…AVAALSVPAL (105 aa)). Catalysis depends on D103, which acts as the Nucleophile. Catalysis depends on H298, which acts as the Proton acceptor.

This sequence belongs to the AB hydrolase superfamily. Epoxide hydrolase family. In terms of assembly, homodimer.

The enzyme catalyses an epoxide + H2O = an ethanediol. Its function is as follows. Could be involved in detoxification of extraneous host-cell epoxides. Catalyzes the hydrolysis of epoxide-containing substrates. The protein is Epoxide hydrolase A (ephA) of Mycobacterium tuberculosis (strain ATCC 25618 / H37Rv).